The chain runs to 560 residues: Zorya protein ZorC (560 aa).

Component of antiviral defense system Zorya type I, composed of ZorA, ZorB, ZorC and ZorD. Expression of Zorya type I in E.coli (strain MG1655) confers 10,000-fold resistance to phage SECphi27, 100-fold resistance to lambda, and 10-fold resistance to T7. While most T7 infected Zorya-containing cells undergo abortive infection, a minority produce viable phage progeny. These eventually accumulate to a high multiplicity of infection, leading to culture collapse by 2 hours after initial infection. ZorA and ZorB probably assemble in the cell inner membrane and exert their effect there. In Escherichia coli O139:H28 (strain E24377A / ETEC), this protein is Zorya protein ZorC.